The chain runs to 103 residues: Large ribosomal subunit protein bL21 (103 aa).

This sequence belongs to the bacterial ribosomal protein bL21 family. As to quaternary structure, part of the 50S ribosomal subunit. Contacts protein L20.

In terms of biological role, this protein binds to 23S rRNA in the presence of protein L20. The polypeptide is Large ribosomal subunit protein bL21 (Alcanivorax borkumensis (strain ATCC 700651 / DSM 11573 / NCIMB 13689 / SK2)).